Reading from the N-terminus, the 583-residue chain is CD166 antigen (583 aa).

An N-terminal signal peptide occupies residues 1–27 (MASKAAPSCRLVFCLLISATVLRPGLG). Ig-like V-type domains lie at 28 to 120 (WYTV…TEDD) and 125 to 234 (PTVV…KTVY). The Extracellular segment spans residues 28–527 (WYTVNSAYGD…NKEKVNDQAK (500 aa)). 2 cysteine pairs are disulfide-bonded: Cys43–Cys113 and Cys157–Cys220. N-linked (GlcNAc...) asparagine glycosylation is found at Asn91, Asn95, Asn167, Asn265, Asn306, Asn361, Asn457, Asn480, and Asn499. 3 Ig-like C2-type domains span residues 245–328 (PTEQ…AAIT), 333–409 (DLSL…ESLT), and 416–501 (PQIK…LNVS). Disulfide bonds link Cys270–Cys313, Cys354–Cys392, and Cys435–Cys485. A helical membrane pass occupies residues 528–549 (LIVGIVVGLLLAALVAGVVYWL). Over 550-583 (YMKKSKTASKHVNKDLGNMEENKKLEENNHKTEA) the chain is Cytoplasmic. Positions 562 to 583 (NKDLGNMEENKKLEENNHKTEA) are disordered. Over residues 569 to 583 (EENKKLEENNHKTEA) the composition is skewed to basic and acidic residues.

Homodimer. Interacts (via extracellular domain) with CD6 (via extracellular domain). Homodimerization and interaction with CD6 involve the same region and cannot occur simultaneously. The affinity for CD6 is much higher than the affinity for self-association. Interacts (via glycosylated extracellular domain) with LGALS1 and LGALS3. Interaction with LGALS1 or LGALS3 inhibits interaction with CD6. In terms of processing, glycosylated. In terms of tissue distribution, constitutively expressed in the autonomic nervous system. Sympathetic and parasympathetic nerve fibers but not myelinated nerve fibers in the spinal nerve.

The protein resides in the cell membrane. The protein localises to the cell projection. It localises to the axon. Its subcellular location is the dendrite. Functionally, cell adhesion molecule that mediates both heterotypic cell-cell contacts via its interaction with CD6, as well as homotypic cell-cell contacts. Promotes T-cell activation and proliferation via its interactions with CD6. Contributes to the formation and maturation of the immunological synapse via its interactions with CD6. Mediates homotypic interactions with cells that express ALCAM. Mediates attachment of dendritic cells onto endothelial cells via homotypic interaction. Inhibits endothelial cell migration and promotes endothelial tube formation via homotypic interactions. Required for normal organization of the lymph vessel network. Required for normal hematopoietic stem cell engraftment in the bone marrow. Plays a role in hematopoiesis; required for normal numbers of hematopoietic stem cells in bone marrow. Promotes in vitro osteoblast proliferation and differentiation. Promotes neurite extension, axon growth and axon guidance; axons grow preferentially on surfaces that contain ALCAM. Mediates outgrowth and pathfinding for retinal ganglion cell axons. This Bos taurus (Bovine) protein is CD166 antigen (ALCAM).